Reading from the N-terminus, the 423-residue chain is Cytidylate cyclase (423 aa).

The region spanning 79–184 is the Guanylate cyclase domain; sequence CSLFVDISGS…LKIRIGIDFG (106 aa). Phe-82 serves as a coordination point for a ribonucleoside 5'-triphosphate. 3 residues coordinate Mn(2+): Asp-84, Ile-85, and Asp-128. Residues 290–409 are AGS-C domain; sequence ENEQFYSPRD…ICHDSFGLFI (120 aa).

It belongs to the adenylyl cyclase class-4/guanylyl cyclase family. Pyrimidine cyclase subfamily. As to quaternary structure, homodimer. Mn(2+) is required as a cofactor.

The protein resides in the cytoplasm. It catalyses the reaction CTP = 3',5'-cyclic CMP + diphosphate. In terms of biological role, pycsar (pyrimidine cyclase system for antiphage resistance) provides immunity against bacteriophage. The pyrimidine cyclase (PycC) synthesizes cyclic nucleotides in response to infection; these serve as specific second messenger signals. The signal activates the adjacent effector, leading to bacterial cell death and abortive phage infection. A clade E Pycsar system. Functionally, the pyrimidine cyclase gene of a two-gene Pycsar system, weakly generates cyclic CMP (cCMP) from CTP, has little to no activity on ATP, GTP or UTP. Expression of this and adjacent effector SaPycTM (AC P0DV39) probably confers resistance to bacteriophage. The genes are probably only expressed in response to bacteriophage infection. This Staphylococcus aureus protein is Cytidylate cyclase.